An 802-amino-acid polypeptide reads, in one-letter code: Post-transcriptional regulator mkt1 (802 aa).

Phosphoserine is present on residues serine 227, serine 228, and serine 230.

Belongs to the XPG/RAD2 endonuclease family. Interacts with pab1 binding protein ath1.

Functionally, involved in post-transcriptional regulation of gene expression by 3'-UTR-mediated RNA regulation. Promotes interactions between mRNA and poly(A)-binding protein. Binds the 3' UTR of mRNAs, centromeric transcripts and antisense-rDNA. Required for the establishment but not the maintenance of heterochromatin at pericentromeres, and for the maintenance of small domains of facultative heterochromatin known as HOODs. This is Post-transcriptional regulator mkt1 from Schizosaccharomyces pombe (strain 972 / ATCC 24843) (Fission yeast).